Consider the following 385-residue polypeptide: Putative ribosomal RNA large subunit methyltransferase MJ1653 (385 aa).

The region spanning 2-81 is the PUA domain; the sequence is TTKLYVDFGG…LDENYIREKI (80 aa).

Belongs to the methyltransferase superfamily. RlmI family.

The protein localises to the cytoplasm. This chain is Putative ribosomal RNA large subunit methyltransferase MJ1653, found in Methanocaldococcus jannaschii (strain ATCC 43067 / DSM 2661 / JAL-1 / JCM 10045 / NBRC 100440) (Methanococcus jannaschii).